The sequence spans 391 residues: Tryptophan synthase beta chain (391 aa).

Lys86 carries the post-translational modification N6-(pyridoxal phosphate)lysine.

Belongs to the TrpB family. In terms of assembly, tetramer of two alpha and two beta chains. Pyridoxal 5'-phosphate is required as a cofactor.

The enzyme catalyses (1S,2R)-1-C-(indol-3-yl)glycerol 3-phosphate + L-serine = D-glyceraldehyde 3-phosphate + L-tryptophan + H2O. It functions in the pathway amino-acid biosynthesis; L-tryptophan biosynthesis; L-tryptophan from chorismate: step 5/5. Its function is as follows. The beta subunit is responsible for the synthesis of L-tryptophan from indole and L-serine. This chain is Tryptophan synthase beta chain, found in Vibrio metschnikovii.